A 173-amino-acid chain; its full sequence is Putative metal-dependent hydrolase BCE_2729 (173 aa).

Zn(2+)-binding residues include H65, H156, and H160.

It belongs to the metal hydrolase YfiT family. In terms of assembly, homodimer. The cofactor is Zn(2+).

The protein resides in the cytoplasm. Its function is as follows. Possible metal-dependent hydrolase. This chain is Putative metal-dependent hydrolase BCE_2729, found in Bacillus cereus (strain ATCC 10987 / NRS 248).